We begin with the raw amino-acid sequence, 472 residues long: MPQNRSVESQAYSLPLILPDLRREEAIHQITDTLQHLQTVSNDIFSRILQRVETNRDQLQRINGRLSLAQAKIERLKGSKKAIKVFSSAKYPAPDRLQEYSSIFAGAKDGWSAKKQRHKIQSKHRPLDEQAVQEKLKYFPVCVNTRGQDEESAEEGLGSLPRNINSVSSLLLFNTTENLYKKYVLLDPLAGVVTRTNPALEGEDEEKLFDAPLSITKREQLERQTAENYFYVPDLGQVPEIDVPYSLPDLLGVADDLMYSADLGPGIAPSAPGVPIPELPTFTTEDITENSITDRQDGRLLPPPPPPPPPPPPPPPPEPSALSPPAPPPPPLSIPAPAKKGGSDPGDQGAVQGAPKEVVNPSNGRASLLESIRQAGGIGKANLRNVKEKKLEKKKMKEQEQVGATGGGGDLMSDLFNKLAMRRKGISGKVPAAGEASGDGPTGAFARISDTIPPLPPPHQASGDGDEDDWES.

The interval 1 to 51 is required for WASH complex assembly; that stretch reads MPQNRSVESQAYSLPLILPDLRREEAIHQITDTLQHLQTVSNDIFSRILQR. Disordered regions lie at residues 294 to 411 and 429 to 472; these read DRQD…GGDL and KVPA…DWES. Residues 301–334 are compositionally biased toward pro residues; it reads LPPPPPPPPPPPPPPPPEPSALSPPAPPPPPLSI. The VCA stretch occupies residues 352–472; it reads QGAPKEVVNP…GDGDEDDWES (121 aa). The WH2 domain maps to 364–386; it reads GRASLLESIRQAGGIGKANLRNV. Positions 385 to 400 are enriched in basic and acidic residues; sequence NVKEKKLEKKKMKEQE.

The protein belongs to the WASH1 family. Component of the WASH complex.

It is found in the early endosome membrane. The protein localises to the recycling endosome membrane. Acts as a nucleation-promoting factor at the surface of endosomes, where it recruits and activates the Arp2/3 complex to induce actin polymerization, playing a key role in the fission of tubules that serve as transport intermediates during endosome sorting. The sequence is that of WASH complex subunit 1 from Xenopus laevis (African clawed frog).